A 353-amino-acid chain; its full sequence is Magnesium-chelatase subunit ChlI (353 aa).

45-52 (GDRGTGKS) contacts ATP.

It belongs to the Mg-chelatase subunits D/I family.

It localises to the plastid. The protein resides in the chloroplast. It catalyses the reaction protoporphyrin IX + Mg(2+) + ATP + H2O = Mg-protoporphyrin IX + ADP + phosphate + 3 H(+). The protein operates within porphyrin-containing compound metabolism; chlorophyll biosynthesis. Involved in chlorophyll biosynthesis; introduces a magnesium ion into protoporphyrin IX to yield Mg-protoporphyrin IX. This Trieres chinensis (Marine centric diatom) protein is Magnesium-chelatase subunit ChlI (chlI).